The sequence spans 283 residues: Elongation factor Ts (283 aa).

Residues 80 to 83 (TDFV) form an involved in Mg(2+) ion dislocation from EF-Tu region.

Belongs to the EF-Ts family.

The protein resides in the cytoplasm. Functionally, associates with the EF-Tu.GDP complex and induces the exchange of GDP to GTP. It remains bound to the aminoacyl-tRNA.EF-Tu.GTP complex up to the GTP hydrolysis stage on the ribosome. The protein is Elongation factor Ts of Cronobacter sakazakii (strain ATCC BAA-894) (Enterobacter sakazakii).